Consider the following 313-residue polypeptide: Holliday junction branch migration complex subunit RuvB (313 aa).

The segment at 1–157 (MNEYIGQGNI…FGLIMELDFY (157 aa)) is large ATPase domain (RuvB-L). ATP is bound by residues Gly-38, Lys-41, Thr-42, Thr-43, 104–106 (EDF), Arg-147, Tyr-157, and Arg-194. A Mg(2+)-binding site is contributed by Thr-42. Residues 158 to 228 (SIDELSKIIE…MVEEIMFLLG (71 aa)) form a small ATPAse domain (RuvB-S) region. The interval 231 to 313 (KEGLDELDRK…KVQRGLFDEE (83 aa)) is head domain (RuvB-H). 2 residues coordinate DNA: Arg-286 and Arg-291.

It belongs to the RuvB family. In terms of assembly, homohexamer. Forms an RuvA(8)-RuvB(12)-Holliday junction (HJ) complex. HJ DNA is sandwiched between 2 RuvA tetramers; dsDNA enters through RuvA and exits via RuvB. An RuvB hexamer assembles on each DNA strand where it exits the tetramer. Each RuvB hexamer is contacted by two RuvA subunits (via domain III) on 2 adjacent RuvB subunits; this complex drives branch migration. In the full resolvosome a probable DNA-RuvA(4)-RuvB(12)-RuvC(2) complex forms which resolves the HJ.

The protein localises to the cytoplasm. The enzyme catalyses ATP + H2O = ADP + phosphate + H(+). The RuvA-RuvB-RuvC complex processes Holliday junction (HJ) DNA during genetic recombination and DNA repair, while the RuvA-RuvB complex plays an important role in the rescue of blocked DNA replication forks via replication fork reversal (RFR). RuvA specifically binds to HJ cruciform DNA, conferring on it an open structure. The RuvB hexamer acts as an ATP-dependent pump, pulling dsDNA into and through the RuvAB complex. RuvB forms 2 homohexamers on either side of HJ DNA bound by 1 or 2 RuvA tetramers; 4 subunits per hexamer contact DNA at a time. Coordinated motions by a converter formed by DNA-disengaged RuvB subunits stimulates ATP hydrolysis and nucleotide exchange. Immobilization of the converter enables RuvB to convert the ATP-contained energy into a lever motion, pulling 2 nucleotides of DNA out of the RuvA tetramer per ATP hydrolyzed, thus driving DNA branch migration. The RuvB motors rotate together with the DNA substrate, which together with the progressing nucleotide cycle form the mechanistic basis for DNA recombination by continuous HJ branch migration. Branch migration allows RuvC to scan DNA until it finds its consensus sequence, where it cleaves and resolves cruciform DNA. This Thermosipho melanesiensis (strain DSM 12029 / CIP 104789 / BI429) protein is Holliday junction branch migration complex subunit RuvB.